The sequence spans 358 residues: ATP-dependent (S)-NAD(P)H-hydrate dehydratase (358 aa).

Residues 63–354 (LLQSAKNVIP…QQIHQAFEEL (292 aa)) enclose the YjeF C-terminal domain. (6S)-NADPHX contacts are provided by residues glycine 163 and 220–226 (NVVEFDR). ATP contacts are provided by residues 261–265 (KGQHD) and 280–289 (GSNRRCGGQG). Aspartate 290 serves as a coordination point for (6S)-NADPHX.

The protein belongs to the NnrD/CARKD family. Requires Mg(2+) as cofactor.

The enzyme catalyses (6S)-NADHX + ATP = ADP + phosphate + NADH + H(+). It catalyses the reaction (6S)-NADPHX + ATP = ADP + phosphate + NADPH + H(+). Its function is as follows. Catalyzes the dehydration of the S-form of NAD(P)HX at the expense of ATP, which is converted to ADP. Together with NAD(P)HX epimerase, which catalyzes the epimerization of the S- and R-forms, the enzyme allows the repair of both epimers of NAD(P)HX, a damaged form of NAD(P)H that is a result of enzymatic or heat-dependent hydration. This chain is ATP-dependent (S)-NAD(P)H-hydrate dehydratase, found in Nematostella vectensis (Starlet sea anemone).